The chain runs to 147 residues: Large ribosomal subunit protein bL9 (147 aa).

The protein belongs to the bacterial ribosomal protein bL9 family.

In terms of biological role, binds to the 23S rRNA. The protein is Large ribosomal subunit protein bL9 of Natranaerobius thermophilus (strain ATCC BAA-1301 / DSM 18059 / JW/NM-WN-LF).